The sequence spans 156 residues: Cellulose synthase operon protein D (156 aa).

Its pathway is glycan metabolism; bacterial cellulose biosynthesis. In terms of biological role, may have a major role in the perfection of crystallization, involved either in the pore structure itself or in the organization of the pores within the linear array of terminal synthesizing complexes (TCs). The sequence is that of Cellulose synthase operon protein D from Komagataeibacter sucrofermentans (strain ATCC 700178 / DSM 15973 / CECT 7291 / JCM 9730 / LMG 18788 / BPR 2001) (Acetobacter xylinus subsp. sucrofermentans).